The following is a 420-amino-acid chain: Phosphoglycerate kinase (420 aa).

The (2R)-3-phosphoglycerate site is built by Val-26, Asp-27, Tyr-28, Asn-29, Gln-42, Arg-43, Ser-66, His-67, Gly-69, Arg-70, Leu-125, Arg-126, His-173, and Arg-174. Tyr-199 carries the phosphotyrosine modification. A Phosphoserine modification is found at Ser-206. Residues 209–228 (KPFLAILGGAKVSDKIKLIE) form a calmodulin binding region. Gly-217 is an ADP binding site. Residue Gly-217 coordinates CDP. AMP contacts are provided by Ala-218 and Lys-219. Position 218 (Ala-218) interacts with ATP. Ala-218 is a Mg(2+) binding site. A CDP-binding site is contributed by Asp-222. Position 222 (Asp-222) interacts with Mg(2+). Lys-223 is an AMP binding site. Lys-223 is an ATP binding site. Gly-241 provides a ligand contact to ADP. Residue Gly-241 coordinates CDP. Gly-242 and Gly-316 together coordinate AMP. Positions 242 and 316 each coordinate ATP. Residues Gly-341 and Phe-346 each coordinate CDP. Phe-346 is an ADP binding site. Glu-347 provides a ligand contact to AMP. Residues Glu-347, Asp-378, and Thr-379 each contribute to the ATP site. Position 378 (Asp-378) interacts with Mg(2+). Ser-393 is subject to Phosphoserine.

This sequence belongs to the phosphoglycerate kinase family. In terms of assembly, monomer. Interacts with calmodulin in the presence of Ca(2+). It depends on Mg(2+) as a cofactor.

The protein resides in the cytoplasm. The enzyme catalyses (2R)-3-phosphoglycerate + ATP = (2R)-3-phospho-glyceroyl phosphate + ADP. It functions in the pathway carbohydrate degradation; glycolysis; pyruvate from D-glyceraldehyde 3-phosphate: step 2/5. This chain is Phosphoglycerate kinase, found in Dictyostelium discoideum (Social amoeba).